The following is a 267-amino-acid chain: MARFLTLCTWLLLLGPGLLATVRAECSQDCATCSYRLVRPADINFLACVMECEGKLPSLKIWETCKELLQLSKPELPQDGTSTLRENSKPEESHLLAKRYGGFMKRYGGFMKKMDELYPMEPEEEANGSEILAKRYGGFMKKDAEEDDSLANSSDLLKELLETGDNRERSHHQDGSDNEEEVSKRYGGFMRGLKRSPQLEDEAKELQKRYGGFMRRVGRPEWWMDYQKRYGGFLKRFAEALPSDEEGESYSKEVPEMEKRYGGFMRF.

A signal peptide spans 1-24 (MARFLTLCTWLLLLGPGLLATVRA). 3 cysteine pairs are disulfide-bonded: Cys-26–Cys-48, Cys-30–Cys-52, and Cys-33–Cys-65. Over residues 163 to 175 (TGDNRERSHHQDG) the composition is skewed to basic and acidic residues. A disordered region spans residues 163 to 182 (TGDNRERSHHQDGSDNEEEV). 2 propeptides span residues 196-207 (SPQLEDEAKELQ) and 217-227 (VGRPEWWMDYQ). Ser-251 carries the post-translational modification Phosphoserine.

This sequence belongs to the opioid neuropeptide precursor family. In terms of processing, proenkephalin-A is cleaved by CTSL to generate Met-enkephalin. Post-translationally, processed and degraded by ACE. Probably cleaved by ACE. In terms of processing, processed by ACE to generate Met-enkephalin in the nucleus accumbens of the brain. Post-translationally, the N-terminal domain contains 6 conserved cysteines thought to be involved in disulfide bonding and/or processing.

It is found in the cytoplasmic vesicle. The protein localises to the secretory vesicle. Its subcellular location is the chromaffin granule lumen. The protein resides in the secreted. Functionally, neuropeptide that competes with and mimic the effects of opiate drugs. They play a role in a number of physiologic functions, including pain perception and responses to stress. Met-enkephalin-Arg-Phe neuropeptide acts as a strong ligand of Mu-type opioid receptor OPRM1. Met-enkephalin-Arg-Phe-binding to OPRM1 in the nucleus accumbens of the brain increases activation of OPRM1, leading to long-term synaptic depression of glutamate release. In terms of biological role, increases glutamate release in the striatum and decreases GABA concentration in the striatum. Its function is as follows. Increases glutamate release in the striatum. This Homo sapiens (Human) protein is Proenkephalin-A.